The following is a 592-amino-acid chain: Aspartate--tRNA(Asp/Asn) ligase (592 aa).

Glutamate 176 contributes to the L-aspartate binding site. The tract at residues 200–203 (QIFK) is aspartate. L-aspartate is bound at residue arginine 222. Residues 222-224 (RDE) and glutamine 231 contribute to the ATP site. Residue histidine 450 coordinates L-aspartate. ATP is bound at residue glutamate 484. Arginine 491 lines the L-aspartate pocket. 536–539 (GLDR) lines the ATP pocket.

It belongs to the class-II aminoacyl-tRNA synthetase family. Type 1 subfamily. In terms of assembly, homodimer.

It localises to the cytoplasm. The enzyme catalyses tRNA(Asx) + L-aspartate + ATP = L-aspartyl-tRNA(Asx) + AMP + diphosphate. In terms of biological role, aspartyl-tRNA synthetase with relaxed tRNA specificity since it is able to aspartylate not only its cognate tRNA(Asp) but also tRNA(Asn). Reaction proceeds in two steps: L-aspartate is first activated by ATP to form Asp-AMP and then transferred to the acceptor end of tRNA(Asp/Asn). This chain is Aspartate--tRNA(Asp/Asn) ligase, found in Anoxybacillus flavithermus (strain DSM 21510 / WK1).